The chain runs to 285 residues: NADH-cytochrome b5 reductase 1 (285 aa).

A helical membrane pass occupies residues Leu-7–Ser-23. The FAD-binding FR-type domain occupies Thr-40–Val-144. FAD is bound by residues Gly-124–Gly-139 and His-150–Leu-182.

The protein belongs to the flavoprotein pyridine nucleotide cytochrome reductase family. As to quaternary structure, monomer. Component of the 2-(3-amino-3-carboxypropyl)histidine synthase complex composed of DPH1, DPH2, DPH3 and a NADH-dependent reductase, predominantly CBR1. It depends on FAD as a cofactor.

It localises to the mitochondrion outer membrane. The catalysed reaction is 2 Fe(III)-[cytochrome b5] + NADH = 2 Fe(II)-[cytochrome b5] + NAD(+) + H(+). The enzyme catalyses 2 Fe(3+)-[Dph3] + NADH = 2 Fe(2+)-[Dph3] + NAD(+) + H(+). It functions in the pathway protein modification; peptidyl-diphthamide biosynthesis. Functionally, NADH-dependent reductase for DPH3 and cytochrome b5. Required for the first step of diphthamide biosynthesis, a post-translational modification of histidine which occurs in elongation factor 2. DPH1 and DPH2 transfer a 3-amino-3-carboxypropyl (ACP) group from S-adenosyl-L-methionine (SAM) to a histidine residue, the reaction is assisted by a reduction system comprising DPH3 and a NADH-dependent reductase, predominantly CBR1. By reducing DPH3, also involved in the formation of the tRNA wobble base modification mcm5s 2U (5-methoxycarbonylmethyl-2-thiouridine), mediated by the elongator complex. The cytochrome b5/NADH cytochrome b5 reductase electron transfer system supports the catalytic activity of several sterol biosynthetic enzymes. The polypeptide is NADH-cytochrome b5 reductase 1 (CBR1) (Candida glabrata (strain ATCC 2001 / BCRC 20586 / JCM 3761 / NBRC 0622 / NRRL Y-65 / CBS 138) (Yeast)).